The chain runs to 1124 residues: Zinc finger E-box-binding homeobox 1 (1124 aa).

Disordered stretches follow at residues 1–124 (MADG…NHDP) and 142–163 (APEE…NGTP). The span at 18-30 (NNVTNYNTVVETN) shows a compositional bias: low complexity. A phosphoserine mark is found at serine 31 and serine 33. Acidic residues predominate over residues 44–62 (EESVTDAADCEGVPEDDLP). The span at 72-91 (SSEREGNAKNCWEDDRKEGQ) shows a compositional bias: basic and acidic residues. The segment at 170–193 (LTCPYCDRGYKRFTSLKEHIKYRH) adopts a C2H2-type 1 zinc-finger fold. Glycyl lysine isopeptide (Lys-Gly) (interchain with G-Cter in SUMO2) cross-links involve residues lysine 186 and lysine 195. 2 C2H2-type zinc fingers span residues 200–222 (FSCS…MTSH) and 240–262 (FKCT…LRIH). Residues 268-292 (YECPNCKKRFSHSGSYSSHISSKKC) form a C2H2-type 4; atypical zinc finger. The disordered stretch occupies residues 304–327 (TGLKTSQCSSPSLSASPGSPTRPQ). Residue lysine 307 forms a Glycyl lysine isopeptide (Lys-Gly) (interchain with G-Cter in SUMO2) linkage. Over residues 309 to 322 (SQCSSPSLSASPGS) the composition is skewed to low complexity. Phosphoserine occurs at positions 313 and 322. Residues lysine 331 and lysine 335 each participate in a glycyl lysine isopeptide (Lys-Gly) (interchain with G-Cter in SUMO2) cross-link. Lysine 347 participates in a covalent cross-link: Glycyl lysine isopeptide (Lys-Gly) (interchain with G-Cter in SUMO); alternate. Lysine 347 is covalently cross-linked (Glycyl lysine isopeptide (Lys-Gly) (interchain with G-Cter in SUMO2); alternate). Glycyl lysine isopeptide (Lys-Gly) (interchain with G-Cter in SUMO2) cross-links involve residues lysine 439, lysine 493, lysine 504, lysine 515, lysine 548, and lysine 553. Disordered stretches follow at residues 551–586 (DLKQ…SPSQ) and 636–714 (QISV…SSSR). Positions 581–640 (NLSPSQPPLKNLLSLLKAYYALNAQPSAEELSKIADSVNLPLDVVKKWFEKMQAGQISVQ) form a DNA-binding region, homeobox; atypical. Phosphoserine occurs at positions 642, 679, 686, 693, and 700. Residues 656–687 (AKNNDQPQSANANEPQDSTVNLQSPLKMTNSP) are compositionally biased toward polar residues. Residues 692 to 714 (GSTTNGSRSSTPSPSPLNLSSSR) are compositionally biased toward low complexity. Threonine 702 bears the Phosphothreonine mark. Position 704 is a phosphoserine (serine 704). Lysine 774 is covalently cross-linked (Glycyl lysine isopeptide (Lys-Gly) (interchain with G-Cter in SUMO); alternate). A Glycyl lysine isopeptide (Lys-Gly) (interchain with G-Cter in SUMO2); alternate cross-link involves residue lysine 774. The segment at 856–898 (PPLKVIQPNGNQDERQDTSSEGVSNVEDQNDSDSTPPKKKMRK) is disordered. The segment covering 874-890 (SSEGVSNVEDQNDSDST) has biased composition (polar residues). 2 C2H2-type zinc fingers span residues 904–926 (YACD…KYEH) and 932–954 (HECG…MRLH). The segment at 960–981 (YQCDKCGKRFSHSGSYSQHMNH) adopts a C2H2-type 7; atypical zinc-finger fold. The interval 989–1124 (EAEERDSTEQ…QVSEEKTNEA (136 aa)) is disordered. 2 stretches are compositionally biased toward acidic residues: residues 1031-1052 (EEDE…ELQE) and 1062-1084 (DEEE…ENEG). A compositionally biased stretch (basic and acidic residues) spans 1085–1099 (EEAKTEGLMKDDRAE). The segment covering 1100-1115 (SQASSLGQKVGESSEQ) has biased composition (polar residues).

It belongs to the delta-EF1/ZFH-1 C2H2-type zinc-finger family. In terms of assembly, interacts (via N-terminus) with SMARCA4/BRG1. Ubiquitinated, leading to degradation in a proteasome-dependent manner. Deubiquitinated by USP51, leading to stabilization. Colocalizes with SMARCA4/BRG1 in E-cadherin-negative cells from established lines, and stroma of normal colon as well as in de-differentiated epithelial cells at the invasion front of colorectal carcinomas (at protein level). Expressed in heart and skeletal muscle, but not in liver, spleen, or pancreas.

It localises to the nucleus. Functionally, acts as a transcriptional repressor. Inhibits interleukin-2 (IL-2) gene expression. Enhances or represses the promoter activity of the ATP1A1 gene depending on the quantity of cDNA and on the cell type. Represses E-cadherin promoter and induces an epithelial-mesenchymal transition (EMT) by recruiting SMARCA4/BRG1. Represses BCL6 transcription in the presence of the corepressor CTBP1. Positively regulates neuronal differentiation. Represses RCOR1 transcription activation during neurogenesis. Represses transcription by binding to the E box (5'-CANNTG-3'). In the absence of TGFB1, acts as a repressor of COL1A2 transcription via binding to the E-box in the upstream enhancer region. The sequence is that of Zinc finger E-box-binding homeobox 1 from Homo sapiens (Human).